The sequence spans 187 residues: MSVADDILNDLHGGIANTLDDLRRELASVRTGRASLHLLDGVRVDYYGTSTPLNQVATLSVPEARLIMVKPWEKNLIPVIEKAIRDANLGVNPQSDKDLVRVPIPPLTEERRKEIVKQVKHKGEDHKVAIRNQRRDAKELIEVAEKDGDIAADDAKKALDKMQKETDEGVKKVDEIVAAKEKEVMQV.

The protein belongs to the RRF family.

It is found in the cytoplasm. Functionally, responsible for the release of ribosomes from messenger RNA at the termination of protein biosynthesis. May increase the efficiency of translation by recycling ribosomes from one round of translation to another. The polypeptide is Ribosome-recycling factor (Anaeromyxobacter sp. (strain Fw109-5)).